The sequence spans 315 residues: Alpha- and gamma-adaptin-binding protein p34 (315 aa).

The segment at 197–233 (IGSADPCHPEQPHLPAADRTESLSDHRGGASNTTDAQ) is disordered. The span at 203 to 224 (CHPEQPHLPAADRTESLSDHRG) shows a compositional bias: basic and acidic residues. A phosphoserine mark is found at Ser-310 and Ser-311.

In terms of assembly, associated with AP-1 and AP-2 complexes.

It is found in the cytoplasm. It localises to the cytosol. May be involved in endocytic recycling of growth factor receptors such as EGFR. This Pongo abelii (Sumatran orangutan) protein is Alpha- and gamma-adaptin-binding protein p34 (AAGAB).